The sequence spans 920 residues: Rho GTPase-activating protein REN1 (920 aa).

Positions 1–10 are enriched in polar residues; the sequence is MANKNAESSS. A disordered region spans residues 1 to 64; the sequence is MANKNAESSS…SRGGNTVFKS (64 aa). Residues 17–31 show a composition bias toward low complexity; the sequence is QPNQQQQQQPPIANE. The segment covering 45–64 has biased composition (polar residues); sequence PAQSGNTDSRSRGGNTVFKS. The PH domain occupies 60–167; the sequence is TVFKSGPLSI…WKAALENALT (108 aa). The 200-residue stretch at 213-412 folds into the Rho-GAP domain; the sequence is LALEDVDGAP…TLLEEYESIF (200 aa). 3 disordered regions span residues 417–592, 719–825, and 837–920; these read LSPG…NLSM, RLGH…ALSK, and RSQI…TFSR. Over residues 434 to 463 the composition is skewed to acidic residues; sequence EGSDDEEYDDDDDGSQGSEDYTDEEEDLEN. Residues 464–473 show a composition bias toward polar residues; that stretch reads ESNGSYSESA. 3 stretches are compositionally biased toward basic and acidic residues: residues 475–491, 499–509, and 520–532; these read SEDKYADSIDPDDHKIN, KSPKRSKEPKK, and PRHDDGKKDEDIV. Over residues 555–568 the composition is skewed to polar residues; the sequence is SSTSDVASDTQKPS. Basic residues predominate over residues 577–586; the sequence is SKRHWGRTPG. The stretch at 598–728 forms a coiled coil; that stretch reads SVEVDEDNAD…RLGHHDGKAS (131 aa). Composition is skewed to basic and acidic residues over residues 734–768 and 776–788; these read ASKESRKLPEHNAKMKEKQKDTEAASTHISERSTS and RENETEKQQDSRS. Residues 814–825 are compositionally biased toward low complexity; that stretch reads EGSTTTTSALSK. Composition is skewed to polar residues over residues 854 to 864 and 872 to 885; these read GQPSPTSGQNR and GSGSNQDPDSSKLQ. Basic and acidic residues predominate over residues 889–903; sequence ILDRGRSENGGDRGR. Positions 910-920 are enriched in polar residues; sequence HPNTTPRTFSR.

Interacts with ARAC11/ROP1. Expressed in pollen and pollen tubes.

Its subcellular location is the cell membrane. Functionally, acts as a GTPase activator for the Rac-type GTPase by converting it to an inactive GDP-bound state. Maintains the global inactivation of ARAC11/ROP1 at the apex in pollen tubes in order to regulate the polar cell growth. This is Rho GTPase-activating protein REN1 (REN1) from Arabidopsis thaliana (Mouse-ear cress).